The sequence spans 592 residues: Inactive metallocarboxypeptidase ECM14 (592 aa).

Positions 1-21 are cleaved as a signal peptide; sequence MRQFTHGTLLAILALANTISA. Positions 22–174 are excised as a propeptide; it reads IPSFSANNYP…QTVYESYPSS (153 aa). The span at 170-179 shows a compositional bias: polar residues; it reads SYPSSSQRPT. The disordered stretch occupies residues 170–191; sequence SYPSSSQRPTDNGRGFLPSRES. Positions 202 to 521 constitute a Peptidase M14 domain; it reads DYQPLSVIGP…NAVMVLGKFL (320 aa). 2 residues coordinate Zn(2+): His264 and Glu267. Residues 264–267, Arg322, and 339–340 each bind substrate; these read HARE and DR. The cysteines at positions 333 and 356 are disulfide-linked. Asn349 carries N-linked (GlcNAc...) asparagine glycosylation. His396 serves as a coordination point for Zn(2+). 397-398 is a binding site for substrate; the sequence is SY. A disordered region spans residues 542 to 592; sequence ADKPILDDGDDDEEEDGQDKNDDSWIPDEYKNDNDHDDDDDGWGLRRRRKR. Residues 548–558 are compositionally biased toward acidic residues; it reads DDGDDDEEEDG. The span at 559 to 575 shows a compositional bias: basic and acidic residues; sequence QDKNDDSWIPDEYKNDN.

Belongs to the peptidase M14 family. Requires Zn(2+) as cofactor.

The protein resides in the vacuole. The protein localises to the secreted. Inactive carboxypeptidase that may play a role in cell wall organization and biogenesis. In Blastomyces gilchristii (strain SLH14081) (Blastomyces dermatitidis), this protein is Inactive metallocarboxypeptidase ECM14 (ECM14).